The sequence spans 876 residues: Leucine--tRNA ligase (876 aa).

A 'HIGH' region motif is present at residues 43–53 (PYPSGRIHMGH). A 'KMSKS' region motif is present at residues 632-636 (KMSKS). ATP is bound at residue lysine 635.

It belongs to the class-I aminoacyl-tRNA synthetase family.

The protein resides in the cytoplasm. The enzyme catalyses tRNA(Leu) + L-leucine + ATP = L-leucyl-tRNA(Leu) + AMP + diphosphate. The sequence is that of Leucine--tRNA ligase from Rhodopseudomonas palustris (strain ATCC BAA-98 / CGA009).